A 124-amino-acid polypeptide reads, in one-letter code: MFTFALLLLCVQGCLIQNVYGQCCGCGCGGGCGCGCYGGEGDGNVNVCGELPVCGETLVCGRVPICGGVCFKGPACASGCVSICGRCCGCGCGGCGGCGCGCGGCGCGCGGCGGCGCGRRCCCC.

The signal sequence occupies residues 1 to 21 (MFTFALLLLCVQGCLIQNVYG). Residues 22–35 (QCCGCGCGGGCGCG) form a left arm region. The interval 36-83 (CYGGEGDGNVNVCGELPVCGETLVCGRVPICGGVCFKGPACASGCVSI) is central domain. Positions 84–124 (CGRCCGCGCGGCGGCGCGCGGCGCGCGGCGGCGCGRRCCCC) are right arm (Gly- and Cys-rich tandem repeats).

Belongs to the chorion protein family.

Functionally, this protein is one of many from the eggshell of the silk moth. The protein is Chorion class high-cysteine HCA protein 12 of Bombyx mori (Silk moth).